The chain runs to 495 residues: YTH domain-containing protein ECT3 (495 aa).

Residues 261-398 form the YTH domain; that stretch reads AKFYVIKSYS…EQGIKVIKIF (138 aa). RNA-binding positions include 267–269, Asp-273, 283–284, Asn-316, Trp-340, Trp-345, and Trp-353; these read KSY and WS.

In terms of tissue distribution, expressed in the shoot apex, at the sites of leaf formation, and in emerging leaves.

Its subcellular location is the cytoplasm. Specifically recognizes and binds N6-methyladenosine (m6A)-containing RNAs, and regulates mRNA stability. M6A is a modification present at internal sites of mRNAs and some non-coding RNAs and plays a role in mRNA stability and processing. Required for the correct timing of leaf formation and normal leaf morphology. Required for proper trichome branching and morphology. Functions redundantly with ECT2. The chain is YTH domain-containing protein ECT3 from Arabidopsis thaliana (Mouse-ear cress).